A 400-amino-acid chain; its full sequence is Subtilisin-like protease CPC735_047380 (400 aa).

The signal sequence occupies residues 1 to 19 (MARINVVVSFLAALAVVQA). A propeptide spanning residues 20-118 (AQLLNLDGQK…IEPQRTFRAF (99 aa)) is cleaved from the precursor. In terms of domain architecture, Inhibitor I9 spans 35–116 (SYVVVMNDGL…NYIEPQRTFR (82 aa)). The 273-residue stretch at 128–400 (SWGLGRISHT…DKLLYNGSGQ (273 aa)) folds into the Peptidase S8 domain. Asn153 is a glycosylation site (N-linked (GlcNAc...) asparagine). Catalysis depends on charge relay system residues Asp160 and His191. Asn244 and Asn252 each carry an N-linked (GlcNAc...) asparagine glycan. Catalysis depends on Ser346, which acts as the Charge relay system. Asn396 is a glycosylation site (N-linked (GlcNAc...) asparagine).

It belongs to the peptidase S8 family.

It localises to the secreted. Functionally, secreted subtilisin-like serine protease with keratinolytic activity that contributes to pathogenicity. This is Subtilisin-like protease CPC735_047380 from Coccidioides posadasii (strain C735) (Valley fever fungus).